The chain runs to 473 residues: Sphingosine kinase 1 (473 aa).

Residues 83–233 (QCRGNLLVFI…VALYSVKTDN (151 aa)) enclose the DAGKc domain. ATP-binding positions include 93–95 (NPN) and 125–129 (TTGPN). 151-154 (SGDG) contributes to the substrate binding site. The active-site Proton donor/acceptor is the Asp153. Residues Glu158 and 184–186 (GSG) each bind ATP. Asp251 provides a ligand contact to substrate. Residues Arg258, Arg265, and 448-450 (DGE) contribute to the ATP site.

Requires Mg(2+) as cofactor. In terms of tissue distribution, expressed in the majority of cholinergic and GABAergic neurons, body wall muscle, excretory canal cells, intestine, and hypodermis.

The protein localises to the presynaptic cell membrane. It is found in the cell projection. The protein resides in the axon. It localises to the perikaryon. Its subcellular location is the mitochondrion membrane. The enzyme catalyses a sphingoid base + ATP = a sphingoid 1-phosphate + ADP + H(+). It carries out the reaction 15-methylhexadecasphing-4-enine + ATP = 15-methylhexadecasphing-4-enine 1-phosphate + ADP + H(+). The catalysed reaction is 15-methylhexadecasphinganine + ATP = 15-methylhexadecasphinganine 1-phosphate + ADP + H(+). It functions in the pathway lipid metabolism; sphingolipid metabolism. Functionally, catalyzes the phosphorylation of sphingoid bases to form sphingoid 1-phosphate (SPP), which have both intra- and extracellular functions. C.elegans contain specific sphingoid bases, which are unique or different in structure compared to the sphingoid bases found in other animals. Two examples of these distinctive compounds are: 15-methylhexadecasphinganine and 15-methylhexadecasphing-4-enine. Required for neurotransmitter release from neuromuscular junctions. Acts by recruiting the synaptic vesicle priming protein unc-13 to synapses. This Caenorhabditis elegans protein is Sphingosine kinase 1 (sphk-1).